A 28-amino-acid polypeptide reads, in one-letter code: Dermaseptin-H2 (28 aa).

This sequence belongs to the frog skin active peptide (FSAP) family. Dermaseptin subfamily. Expressed by the skin glands.

It is found in the secreted. Possesses a potent antimicrobial activity against Gram-positive and Gram-negative bacteria. Probably acts by disturbing membrane functions with its amphipathic structure. The polypeptide is Dermaseptin-H2 (Pithecopus azureus (Orange-legged monkey tree frog)).